The chain runs to 720 residues: Calpain-12 (720 aa).

The region spanning 45–341 (LFRDPCFPAG…FNTVQICSLS (297 aa)) is the Calpain catalytic domain. Active-site residues include C105, H259, and N283. The interval 342-541 (PEVLGPSPAG…DDVISADLDA (200 aa)) is domain III. Residues 393–403 (DEEEDDDDEEG) show a composition bias toward acidic residues. Residues 393–415 (DEEEDDDDEEGPWGGWGAAGARG) are disordered. Residues 542–720 (LQAPYKPLEL…KQWSEVATFS (179 aa)) form a domain IV region. The region spanning 621 to 656 (GHLMSWQATFDKFDEDASGTMNSCELRLALTAAGFH) is the EF-hand domain. D634, D636, S638, T640, and E645 together coordinate Ca(2+).

This sequence belongs to the peptidase C2 family. As to expression, expression localized to the cortex of the hair follicle during the anagen phase of hair cycle.

In terms of biological role, calcium-regulated non-lysosomal thiol-protease. The protein is Calpain-12 (Capn12) of Mus musculus (Mouse).